The following is a 258-amino-acid chain: 3-deoxy-manno-octulosonate cytidylyltransferase (258 aa).

It belongs to the KdsB family.

It is found in the cytoplasm. The catalysed reaction is 3-deoxy-alpha-D-manno-oct-2-ulosonate + CTP = CMP-3-deoxy-beta-D-manno-octulosonate + diphosphate. Its pathway is nucleotide-sugar biosynthesis; CMP-3-deoxy-D-manno-octulosonate biosynthesis; CMP-3-deoxy-D-manno-octulosonate from 3-deoxy-D-manno-octulosonate and CTP: step 1/1. It participates in bacterial outer membrane biogenesis; lipopolysaccharide biosynthesis. Its function is as follows. Activates KDO (a required 8-carbon sugar) for incorporation into bacterial lipopolysaccharide in Gram-negative bacteria. This Pasteurella multocida (strain Pm70) protein is 3-deoxy-manno-octulosonate cytidylyltransferase.